Reading from the N-terminus, the 280-residue chain is C-type lectin domain family 1 member A (280 aa).

A disordered region spans residues Met1–Ser44. Residues Met1–Leu52 are Cytoplasmic-facing. The span at Thr18–Thr30 shows a compositional bias: polar residues. Residues Arg31 to Ala42 show a composition bias toward basic and acidic residues. Residues Thr53–Phe73 traverse the membrane as a helical; Signal-anchor for type II membrane protein segment. The Extracellular portion of the chain corresponds to Gln74–Asp280. 2 N-linked (GlcNAc...) asparagine glycosylation sites follow: Asn95 and Asn169. The C-type lectin domain occupies His144–Glu258. Cystine bridges form between Cys165–Cys257 and Cys236–Cys249.

In terms of tissue distribution, expressed preferentially in dendritic cells.

Its subcellular location is the membrane. The polypeptide is C-type lectin domain family 1 member A (CLEC1A) (Homo sapiens (Human)).